Here is a 481-residue protein sequence, read N- to C-terminus: Ribulose bisphosphate carboxylase large chain (481 aa).

The propeptide occupies 1 to 2 (MS). P3 carries the post-translational modification N-acetylproline. N6,N6,N6-trimethyllysine is present on K14. Positions 123 and 173 each coordinate substrate. K175 acts as the Proton acceptor in catalysis. K177 provides a ligand contact to substrate. Mg(2+) contacts are provided by K201, D203, and E204. An N6-carboxylysine modification is found at K201. The active-site Proton acceptor is H294. R295, H327, and S379 together coordinate substrate.

It belongs to the RuBisCO large chain family. Type I subfamily. Heterohexadecamer of 8 large chains and 8 small chains; disulfide-linked. The disulfide link is formed within the large subunit homodimers. Mg(2+) serves as cofactor. Post-translationally, the disulfide bond which can form in the large chain dimeric partners within the hexadecamer appears to be associated with oxidative stress and protein turnover.

It localises to the plastid. The catalysed reaction is 2 (2R)-3-phosphoglycerate + 2 H(+) = D-ribulose 1,5-bisphosphate + CO2 + H2O. It carries out the reaction D-ribulose 1,5-bisphosphate + O2 = 2-phosphoglycolate + (2R)-3-phosphoglycerate + 2 H(+). RuBisCO catalyzes two reactions: the carboxylation of D-ribulose 1,5-bisphosphate, the primary event in carbon dioxide fixation, as well as the oxidative fragmentation of the pentose substrate in the photorespiration process. Both reactions occur simultaneously and in competition at the same active site. This Cuscuta obtusiflora (Peruvian dodder) protein is Ribulose bisphosphate carboxylase large chain.